The sequence spans 402 residues: MIVIEKVDKTPVVKRLVEIVERKGQGHPDYIADGISEWVSRYLSRYYLEHFGIILHHNVDKTLVVGGQAAPRFGGGEVLQPIYILVSGRATYEVRTKDGVIKVPLGTLVMQAARDWIKQHFRFLDPDTHVVIDYKIGQGSADLVGIYDLGVKSVPLANDTSVGVGYAPLTPLEQLVYKTERLLNSRDFKAKYPEVGEDVKVMGVRVGKEVKLTVAAAMISKLVKDKSHYLSVKEDVKKAVEDLASKVAPEYNIEVVVNAADKPEHGIFYLTVTGTSAEHGDDGMTGRGNRANGLITPMRSMSLEAAAGKNPVSHVGKIYNVVAQRIADKVYNQVKDIIEVYVEIVSQIGKPINEPKILNVEIIKSGELTGEVRNEVEAIAREEIEKITQITDYILRGEVSLY.

137 to 142 (GQGSAD) contributes to the ATP binding site.

It belongs to the AdoMet synthase 2 family. Mg(2+) serves as cofactor.

It carries out the reaction L-methionine + ATP + H2O = S-adenosyl-L-methionine + phosphate + diphosphate. The protein operates within amino-acid biosynthesis; S-adenosyl-L-methionine biosynthesis; S-adenosyl-L-methionine from L-methionine: step 1/1. Its function is as follows. Catalyzes the formation of S-adenosylmethionine from methionine and ATP. The chain is S-adenosylmethionine synthase from Pyrobaculum islandicum (strain DSM 4184 / JCM 9189 / GEO3).